Reading from the N-terminus, the 314-residue chain is Olfactory receptor 11H7 (314 aa).

Over 1-24 (MNNSQISTVTQFVLLGFPGPWKIQ) the chain is Extracellular. An N-linked (GlcNAc...) asparagine glycan is attached at Asn2. Residues 25–45 (IIFFSMILLVYIFTLTGNMAI) form a helical membrane-spanning segment. Topologically, residues 46-57 (ICAVRWDHRLHT) are cytoplasmic. The chain crosses the membrane as a helical span at residues 58 to 78 (PMYVLLANFSFLEIWYVTCTV). The Extracellular portion of the chain corresponds to 79-97 (PNMLVNFFSKTKTISFSGC). Cysteines 97 and 179 form a disulfide. The chain crosses the membrane as a helical span at residues 98 to 118 (FTQFHFFFSLGTTECFFLCVM). Residues 119 to 142 (AYDRYLAICHPLHYPSIMTGQLCG) are Cytoplasmic-facing. Residues 143–163 (ILVSLCWLIGFLGHSISIFFI) form a helical membrane-spanning segment. The Extracellular segment spans residues 164-201 (FQLPFCGPNIIDHFLCDVDPLMALSSAPTHIIGHVFHS). Residues 202-222 (VSSLFINLTMVYILGSYTLVL) form a helical membrane-spanning segment. Residues 223–244 (RTVLQVPSSAGWQKAISTCGSH) are Cytoplasmic-facing. A helical membrane pass occupies residues 245-265 (LVVVSLFYGAIMLMYVSPTPG). Residues 266–271 (NSVAMH) lie on the Extracellular side of the membrane. Residues 272 to 292 (KLITLIYSVVTPVLNPLIYSL) form a helical membrane-spanning segment. Over 293 to 314 (RNKDMKYALHHVFCGMRIIQRS) the chain is Cytoplasmic.

The protein belongs to the G-protein coupled receptor 1 family.

The protein resides in the cell membrane. Odorant receptor. Activated by isovaleric acid. In Homo sapiens (Human), this protein is Olfactory receptor 11H7 (OR11H7).